A 237-amino-acid polypeptide reads, in one-letter code: Ras-related protein Rab-23 (237 aa).

A GDP-binding site is contributed by Ala-19. GTP is bound by residues Val-20, Gly-21, Lys-22, Ser-23, and Ser-24. Residues Gly-21, Lys-22, Ser-23, Ser-24, and Asp-37 each coordinate GDP. Ser-23 provides a ligand contact to Mg(2+). A Switch 1 motif is present at residues 28 to 46; the sequence is RYCKGIFTKDYKKTIGVDF. Tyr-38 contributes to the GTP binding site. Lys-40 contacts GDP. Thr-41 contacts GTP. Mg(2+) contacts are provided by Thr-41 and Asp-64. Positions 65-84 match the Switch 2 motif; that stretch reads TAGQEEFDAITKAYYRGAQA. Residues Gly-67, Asn-121, Lys-122, Asp-124, Ser-151, Val-152, and Lys-153 each coordinate GTP. GDP contacts are provided by Asn-121, Lys-122, and Asp-124. Positions 152 and 153 each coordinate GDP. Ser-186 and Ser-187 each carry phosphoserine. Residues 204 to 237 form a disordered region; it reads QNSSSLNGGDVINLRPNKQRTKRTRNPFSSCSVP. Cys-234 carries the post-translational modification Cysteine methyl ester. Cys-234 carries S-geranylgeranyl cysteine lipidation. Positions 235–237 are cleaved as a propeptide — removed in mature form; it reads SVP.

Belongs to the small GTPase superfamily. Rab family. In terms of assembly, interacts with SUFU. Mg(2+) is required as a cofactor. In terms of tissue distribution, detected in brain neurons (at protein level). Forebrain and midbrain.

Its subcellular location is the cell membrane. It is found in the cytoplasm. The protein localises to the endosome membrane. The protein resides in the cytoplasmic vesicle. It localises to the autophagosome. Its subcellular location is the phagosome. It is found in the phagosome membrane. It catalyses the reaction GTP + H2O = GDP + phosphate + H(+). Its activity is regulated as follows. Regulated by guanine nucleotide exchange factors (GEFs) which promote the exchange of bound GDP for free GTP. Regulated by GTPase activating proteins (GAPs) which increase the GTP hydrolysis activity. Inhibited by GDP dissociation inhibitors (GDIs). The small GTPases Rab are key regulators of intracellular membrane trafficking, from the formation of transport vesicles to their fusion with membranes. Rabs cycle between an inactive GDP-bound form and an active GTP-bound form that is able to recruit to membranes different set of downstream effectors directly responsible for vesicle formation, movement, tethering and fusion. Plays a role in autophagic vacuole assembly, and mediates defense against pathogens, such as S.aureus, by promoting their capture by autophagosomes that then merge with lysosomes. Together with SUFU, prevents nuclear import of GLI1, and thereby inhibits GLI1 transcription factor activity. Regulates GLI1 in differentiating chondrocytes. Likewise, regulates GLI3 proteolytic processing and modulates GLI2 and GLI3 transcription factor activity. In Mus musculus (Mouse), this protein is Ras-related protein Rab-23.